The primary structure comprises 92 residues: Serine protease inhibitor I/II (92 aa).

Residues 1 to 19 (MKLALALCAAFLLVVLVQA) form the signal peptide. Pacifastin domains lie at 20 to 54 (EQEC…CPPH) and 57 to 92 (EVTC…CPQK). Disulfide bonds link C23-C38, C33-C51, C36-C46, C60-C75, C70-C89, and C73-C84.

The protein belongs to the protease inhibitor I19 family. Expressed in hemolymph, ovaries, testes and fat body of adults but are absent in the gut. Also present in larval hemolymph and fat body.

It is found in the secreted. Its function is as follows. In vitro, is active against alpha-chymotrypsin and trypsin. In vitro, is active against alpha-chymotrypsin and pancreatic elastase. The sequence is that of Serine protease inhibitor I/II from Schistocerca gregaria (Desert locust).